Reading from the N-terminus, the 545-residue chain is CTP synthase (545 aa).

The tract at residues 1-266 (MATNYIFVTG…DTFVCDRFRL (266 aa)) is amidoligase domain. Serine 14 serves as a coordination point for CTP. Serine 14 lines the UTP pocket. ATP contacts are provided by residues 15-20 (SLGKGI) and aspartate 72. Mg(2+)-binding residues include aspartate 72 and glutamate 140. Residues 147 to 149 (DIE), 187 to 192 (KTKPTQ), and lysine 223 contribute to the CTP site. UTP-binding positions include 187–192 (KTKPTQ) and lysine 223. An ATP-binding site is contributed by 239–241 (KDV). The Glutamine amidotransferase type-1 domain occupies 291–542 (TIGMVGKYVE…VKAAKDYQDS (252 aa)). Glycine 352 is an L-glutamine binding site. Residue cysteine 379 is the Nucleophile; for glutamine hydrolysis of the active site. Residues 380–383 (LGMQ), glutamate 403, and arginine 470 contribute to the L-glutamine site. Catalysis depends on residues histidine 515 and glutamate 517.

It belongs to the CTP synthase family. As to quaternary structure, homotetramer.

It carries out the reaction UTP + L-glutamine + ATP + H2O = CTP + L-glutamate + ADP + phosphate + 2 H(+). It catalyses the reaction L-glutamine + H2O = L-glutamate + NH4(+). The catalysed reaction is UTP + NH4(+) + ATP = CTP + ADP + phosphate + 2 H(+). The protein operates within pyrimidine metabolism; CTP biosynthesis via de novo pathway; CTP from UDP: step 2/2. Allosterically activated by GTP, when glutamine is the substrate; GTP has no effect on the reaction when ammonia is the substrate. The allosteric effector GTP functions by stabilizing the protein conformation that binds the tetrahedral intermediate(s) formed during glutamine hydrolysis. Inhibited by the product CTP, via allosteric rather than competitive inhibition. Catalyzes the ATP-dependent amination of UTP to CTP with either L-glutamine or ammonia as the source of nitrogen. Regulates intracellular CTP levels through interactions with the four ribonucleotide triphosphates. The chain is CTP synthase from Actinobacillus pleuropneumoniae serotype 7 (strain AP76).